The primary structure comprises 150 residues: Globin-1 (150 aa).

In terms of domain architecture, Globin spans 11–150 (ALTAAEKATI…MICILLRSSY (140 aa)). Heme b contacts are provided by His-74 and His-106.

The protein belongs to the globin family. In terms of assembly, monomer.

This chain is Globin-1, found in Petromyzon marinus (Sea lamprey).